We begin with the raw amino-acid sequence, 185 residues long: Large ribosomal subunit protein uL22 (185 aa).

The interval 158-185 is disordered; the sequence is AKPREDEPHKKKISKKKLARAKEKMLRE. A compositionally biased stretch (basic residues) spans 167 to 176; the sequence is KKKISKKKLA.

It belongs to the universal ribosomal protein uL22 family.

The polypeptide is Large ribosomal subunit protein uL22 (RpL17) (Diaphorina citri (Asian citrus psyllid)).